The following is a 302-amino-acid chain: Acetylesterase (302 aa).

The first 21 residues, 1-21, serve as a signal peptide directing secretion; the sequence is MGRFLTTTALALLATGGAATA. N-linked (GlcNAc...) asparagine glycans are attached at residues N84 and N101.

This sequence belongs to the carbohydrate esterase CE16 family.

It localises to the secreted. It catalyses the reaction an acetyl ester + H2O = an aliphatic alcohol + acetate + H(+). In terms of biological role, acetyl esterase that acts as an exo-deacetylase. Liberates acetic acid from xylo-oligomers. This is Acetylesterase from Thermothelomyces thermophilus (Myceliophthora thermophila).